Consider the following 391-residue polypeptide: Elongation factor Tu (391 aa).

Residues lysine 10–glutamate 201 enclose the tr-type G domain. The interval glycine 19–threonine 26 is G1. Position 19–26 (glycine 19–threonine 26) interacts with GTP. Mg(2+) is bound at residue threonine 26. Positions glycine 55–serine 59 are G2. The segment at aspartate 76–glycine 79 is G3. Residues aspartate 76–histidine 80 and asparagine 131–aspartate 134 contribute to the GTP site. A G4 region spans residues asparagine 131 to aspartate 134. A G5 region spans residues serine 169–leucine 171.

The protein belongs to the TRAFAC class translation factor GTPase superfamily. Classic translation factor GTPase family. EF-Tu/EF-1A subfamily. As to quaternary structure, monomer.

The protein resides in the cytoplasm. The enzyme catalyses GTP + H2O = GDP + phosphate + H(+). Functionally, GTP hydrolase that promotes the GTP-dependent binding of aminoacyl-tRNA to the A-site of ribosomes during protein biosynthesis. The chain is Elongation factor Tu from Ruegeria sp. (strain TM1040) (Silicibacter sp.).